Consider the following 130-residue polypeptide: Phosphoribosyl-AMP cyclohydrolase (130 aa).

Residue aspartate 77 participates in Mg(2+) binding. Residue cysteine 78 participates in Zn(2+) binding. The Mg(2+) site is built by aspartate 79 and aspartate 81. Residues cysteine 95 and cysteine 102 each coordinate Zn(2+).

This sequence belongs to the PRA-CH family. In terms of assembly, homodimer. Mg(2+) serves as cofactor. It depends on Zn(2+) as a cofactor.

It is found in the cytoplasm. It carries out the reaction 1-(5-phospho-beta-D-ribosyl)-5'-AMP + H2O = 1-(5-phospho-beta-D-ribosyl)-5-[(5-phospho-beta-D-ribosylamino)methylideneamino]imidazole-4-carboxamide. The protein operates within amino-acid biosynthesis; L-histidine biosynthesis; L-histidine from 5-phospho-alpha-D-ribose 1-diphosphate: step 3/9. Its function is as follows. Catalyzes the hydrolysis of the adenine ring of phosphoribosyl-AMP. This is Phosphoribosyl-AMP cyclohydrolase from Pseudomonas syringae pv. syringae (strain B728a).